The chain runs to 141 residues: Large ribosomal subunit protein uL11 (141 aa).

This sequence belongs to the universal ribosomal protein uL11 family. As to quaternary structure, part of the ribosomal stalk of the 50S ribosomal subunit. Interacts with L10 and the large rRNA to form the base of the stalk. L10 forms an elongated spine to which L12 dimers bind in a sequential fashion forming a multimeric L10(L12)X complex. In terms of processing, one or more lysine residues are methylated.

Functionally, forms part of the ribosomal stalk which helps the ribosome interact with GTP-bound translation factors. This Sulfurimonas denitrificans (strain ATCC 33889 / DSM 1251) (Thiomicrospira denitrificans (strain ATCC 33889 / DSM 1251)) protein is Large ribosomal subunit protein uL11.